A 783-amino-acid polypeptide reads, in one-letter code: uncharacterized protein (783 aa).

Residues 40 to 66 (CFNCKARKVRCDGANPCKACASNNLEC) constitute a DNA-binding region (zn(2)-C6 fungal-type).

The protein localises to the cytoplasm. It localises to the nucleus. This is an uncharacterized protein from Schizosaccharomyces pombe (strain 972 / ATCC 24843) (Fission yeast).